Reading from the N-terminus, the 78-residue chain is Large ribosomal subunit protein bL28 (78 aa).

This sequence belongs to the bacterial ribosomal protein bL28 family.

The chain is Large ribosomal subunit protein bL28 from Escherichia coli O139:H28 (strain E24377A / ETEC).